Consider the following 680-residue polypeptide: DNA-directed RNA polymerase subunit beta' (680 aa).

Residues cysteine 69, cysteine 71, cysteine 87, and cysteine 90 each coordinate Zn(2+). Residues aspartate 489, aspartate 491, and aspartate 493 each coordinate Mg(2+).

It belongs to the RNA polymerase beta' chain family. RpoC1 subfamily. As to quaternary structure, in plastids the minimal PEP RNA polymerase catalytic core is composed of four subunits: alpha, beta, beta', and beta''. When a (nuclear-encoded) sigma factor is associated with the core the holoenzyme is formed, which can initiate transcription. Mg(2+) serves as cofactor. It depends on Zn(2+) as a cofactor.

The protein resides in the plastid. It is found in the chloroplast. The catalysed reaction is RNA(n) + a ribonucleoside 5'-triphosphate = RNA(n+1) + diphosphate. Its function is as follows. DNA-dependent RNA polymerase catalyzes the transcription of DNA into RNA using the four ribonucleoside triphosphates as substrates. The protein is DNA-directed RNA polymerase subunit beta' of Nasturtium officinale (Watercress).